Here is a 289-residue protein sequence, read N- to C-terminus: 4-diphosphocytidyl-2-C-methyl-D-erythritol kinase (289 aa).

Lys-10 is an active-site residue. 94–104 (PVAAGLAGGSS) is a binding site for ATP. Asp-136 is a catalytic residue.

This sequence belongs to the GHMP kinase family. IspE subfamily.

The enzyme catalyses 4-CDP-2-C-methyl-D-erythritol + ATP = 4-CDP-2-C-methyl-D-erythritol 2-phosphate + ADP + H(+). Its pathway is isoprenoid biosynthesis; isopentenyl diphosphate biosynthesis via DXP pathway; isopentenyl diphosphate from 1-deoxy-D-xylulose 5-phosphate: step 3/6. Functionally, catalyzes the phosphorylation of the position 2 hydroxy group of 4-diphosphocytidyl-2C-methyl-D-erythritol. This Bacillus pumilus (strain SAFR-032) protein is 4-diphosphocytidyl-2-C-methyl-D-erythritol kinase.